Here is a 633-residue protein sequence, read N- to C-terminus: uncharacterized protein (633 aa).

The interval 1 to 188 (MNNRGGFSHP…GQSSFYNSSY (188 aa)) is disordered. 2 stretches are compositionally biased toward low complexity: residues 32 to 80 (GQPQ…GGNN) and 104 to 148 (NNGN…TNSR). The segment covering 152-178 (RGGSSRGGSSRGGNSGSSRGGSRGGYR) has biased composition (gly residues). Residues 580-607 (KSKNWTVDQASDELKKLSKNLRLLVSKH) are a coiled coil. Positions 611-633 (TKFQPPSADHTTQFEQDDEEEEN) are disordered.

This is an uncharacterized protein from Dictyostelium discoideum (Social amoeba).